Here is a 353-residue protein sequence, read N- to C-terminus: Terpene synthase 1 (353 aa).

The DDxx(x)D/E motif signature appears at 81–86 (DDAIDA). The NDxxSxxxD/E motif signature appears at 222–230 (NDLVSYEKE).

It belongs to the terpene synthase family.

It carries out the reaction (2E,6E)-farnesyl diphosphate = (2S,3R,6S,9S)-(-)-protoillud-7-ene + diphosphate. Terpene synthase that converts its substrate farnesyl diphosphate (FPP) into the sesquiterpene protoillud-7-ene. This is Terpene synthase 1 from Tieghemostelium lacteum (Slime mold).